The primary structure comprises 255 residues: Proteasome subunit alpha type-3 (255 aa).

Position 2 is an N-acetylserine (Ser-2). N6-acetyllysine is present on residues Lys-57, Lys-206, and Lys-230. Ser-243 and Ser-250 each carry phosphoserine.

This sequence belongs to the peptidase T1A family. In terms of assembly, the 26S proteasome consists of a 20S proteasome core and two 19S regulatory subunits. The 20S proteasome core is a barrel-shaped complex made of 28 subunits that are arranged in four stacked rings. The two outer rings are each formed by seven alpha subunits, and the two inner rings are formed by seven beta subunits. The proteolytic activity is exerted by three beta-subunits PSMB5, PSMB6 and PSMB7. Interacts with AURKB. Interacts with CDKN1A. Interacts with MDM2 and RB1. Interacts with the C-terminus of TBXA2R isoform 2. Interacts with DNAJB2.

Its subcellular location is the cytoplasm. It is found in the nucleus. Its function is as follows. Component of the 20S core proteasome complex involved in the proteolytic degradation of most intracellular proteins. This complex plays numerous essential roles within the cell by associating with different regulatory particles. Associated with two 19S regulatory particles, forms the 26S proteasome and thus participates in the ATP-dependent degradation of ubiquitinated proteins. The 26S proteasome plays a key role in the maintenance of protein homeostasis by removing misfolded or damaged proteins that could impair cellular functions, and by removing proteins whose functions are no longer required. Associated with the PA200 or PA28, the 20S proteasome mediates ubiquitin-independent protein degradation. This type of proteolysis is required in several pathways including spermatogenesis (20S-PA200 complex) or generation of a subset of MHC class I-presented antigenic peptides (20S-PA28 complex). Binds to the C-terminus of CDKN1A and thereby mediates its degradation. Negatively regulates the membrane trafficking of the cell-surface thromboxane A2 receptor (TBXA2R) isoform 2. The sequence is that of Proteasome subunit alpha type-3 (PSMA3) from Bos taurus (Bovine).